Here is a 334-residue protein sequence, read N- to C-terminus: Phosphoribosylformylglycinamidine cyclo-ligase (334 aa).

The protein belongs to the AIR synthase family.

The protein localises to the cytoplasm. It carries out the reaction 2-formamido-N(1)-(5-O-phospho-beta-D-ribosyl)acetamidine + ATP = 5-amino-1-(5-phospho-beta-D-ribosyl)imidazole + ADP + phosphate + H(+). Its pathway is purine metabolism; IMP biosynthesis via de novo pathway; 5-amino-1-(5-phospho-D-ribosyl)imidazole from N(2)-formyl-N(1)-(5-phospho-D-ribosyl)glycinamide: step 2/2. The polypeptide is Phosphoribosylformylglycinamidine cyclo-ligase (Pyrococcus abyssi (strain GE5 / Orsay)).